A 2081-amino-acid chain; its full sequence is Non-reducing polyketide synthase terA (2081 aa).

The tract at residues 85 to 190 is N-terminal acylcarrier protein transacylase (SAT) domain (SAT); it reads TLTLAFRIGV…ISLDIFAPFH (106 aa). Residues 316-749 form the Ketosynthase family 3 (KS3) domain; it reads AQKIAIVGMA…GGNTGLLLED (434 aa). Residues cysteine 488, histidine 623, and histidine 667 each act as for beta-ketoacyl synthase activity in the active site. The segment at 849–1147 is malonyl-CoA:ACP transacylase (MAT) domain; it reads LFTGQGSHYT…LTLPSLRKQE (299 aa). The segment at 1230–1364 is N-terminal hotdog fold; sequence QKVIKEDFGQ…CHVEYGDIKT (135 aa). The 310-residue stretch at 1230-1539 folds into the PKS/mFAS DH domain; sequence QKVIKEDFGQ…FKAIPRAVIN (310 aa). Positions 1259 to 1536 are product template (PT) domain; the sequence is VTGHLVNGSA…GVKFKAIPRA (278 aa). Histidine 1262 functions as the Proton acceptor; for dehydratase activity in the catalytic mechanism. A C-terminal hotdog fold region spans residues 1392–1539; sequence YQKLDRKAAY…FKAIPRAVIN (148 aa). Residue aspartate 1452 is the Proton donor; for dehydratase activity of the active site. Residues 1549-1578 form a disordered region; that stretch reads KALEKSAPRQNPKATATKTTQKPQAPVPVP. Residues 1558 to 1572 show a composition bias toward low complexity; the sequence is QNPKATATKTTQKPQ. In terms of domain architecture, Carrier 1 spans 1580 to 1658; that stretch reads KQNKAIIDDF…QVKELILKLA (79 aa). Position 1617 is an O-(pantetheine 4'-phosphoryl)serine (serine 1617). The tract at residues 1659–1700 is disordered; the sequence is GSSSDENTTDTPDEEEDPATADADNTEMIRENPLESVSPNVS. Residues 1665–1677 show a composition bias toward acidic residues; it reads NTTDTPDEEEDPA. The region spanning 1699-1776 is the Carrier 2 domain; the sequence is VSSSEAMDGF…QARLAIASLM (78 aa). Serine 1736 is subject to O-(pantetheine 4'-phosphoryl)serine. A disordered region spans residues 1783-1809; the sequence is GATTPYSGSDDAKSSTSSLTAGSVLTP. The interval 1840–2070 is thioesterase (TE) domain; that stretch reads TLFLLPDGSG…TMMREPKVNQ (231 aa).

It carries out the reaction 3 malonyl-CoA + acetyl-CoA + 2 H(+) = orsellinate + 3 CO2 + 4 CoA. The protein operates within secondary metabolite biosynthesis. Its function is as follows. Non-reducing polyketide synthase; part of the gene cluster that mediates the biosynthesis of terrein, a fungal metabolite with ecological, antimicrobial, antiproliferative, and antioxidative activities. The first step in the pathway is performed by the polyketide synthase terA that produces 4-hydroxy-6-methylpyranon (4-HMP), orsellinic acid (OA), and 2,3-dehydro-6-hydroxymellein (2,3-dehydro-6-HM) by condensing acetyl-CoA with two, three, or four malonyl-CoA units, respectively. 4-HMP and OA are not pathway intermediates, but are rather shunt or side products. 2,3-dehydro-6-HM is further converted to 6-hydroxymellein (6-HM) by the 6-hydroxymellein synthase terB. The monooxygenases terC and terD, the multicopper oxidase terE and the Kelch-like protein terF are then involved in the transformation of 6-HM to terrein. Even if they are co-regulated with the other terrein cluster genes, terH and terI seem to be dispensable for terrein production; whereas one or both of the 2 transporters terG and terJ are probably required for efficient secretion of metabolites. The chain is Non-reducing polyketide synthase terA from Aspergillus terreus (strain NIH 2624 / FGSC A1156).